The sequence spans 85 residues: Small ribosomal subunit protein uS17 (85 aa).

Belongs to the universal ribosomal protein uS17 family. Part of the 30S ribosomal subunit.

One of the primary rRNA binding proteins, it binds specifically to the 5'-end of 16S ribosomal RNA. The chain is Small ribosomal subunit protein uS17 from Trichlorobacter lovleyi (strain ATCC BAA-1151 / DSM 17278 / SZ) (Geobacter lovleyi).